The chain runs to 359 residues: Acyl-CoA Delta-9 desaturase (359 aa).

2 helical membrane-spanning segments follow: residues 51–71 (VILF…AFTS) and 74–94 (IATT…ITGG). 5 residues coordinate Fe cation: H96, H101, H133, H136, and H137. Residues 96-101 (HRLWAH) carry the Histidine box-1 motif. The Histidine box-2 motif lies at 133 to 137 (HRVHH). Transmembrane regions (helical) follow at residues 194–214 (YLIL…VYMW) and 222–244 (WFVA…NSAA). Residues H245, H274, H277, and H278 each contribute to the Fe cation site. A Histidine box-3 motif is present at residues 274–278 (HNYHH).

Belongs to the fatty acid desaturase type 1 family. Fe(2+) is required as a cofactor.

Its subcellular location is the membrane. The catalysed reaction is octadecanoyl-CoA + 2 Fe(II)-[cytochrome b5] + O2 + 2 H(+) = (9Z)-octadecenoyl-CoA + 2 Fe(III)-[cytochrome b5] + 2 H2O. The enzyme catalyses hexadecanoyl-CoA + 2 Fe(II)-[cytochrome b5] + O2 + 2 H(+) = (9Z)-hexadecenoyl-CoA + 2 Fe(III)-[cytochrome b5] + 2 H2O. Its function is as follows. Catalyzes the formation of a Delta9 double bond, acting on saturated fatty acyl substrates like palmitoyl-CoA (hexadecanoyl-CoA) and stearoyl-CoA (octadecanoyl-CoA) with higher desaturation activity on octadecanoyl-CoA than hexadecanoyl-CoA. The protein is Acyl-CoA Delta-9 desaturase of Acheta domesticus (House cricket).